The sequence spans 864 residues: 3-O-alpha-D-mannopyranosyl-alpha-D-mannopyranose xylosylphosphotransferase (864 aa).

Positions 1-14 are enriched in pro residues; sequence MPPTALPPLRPPAQ. Positions 1–47 are disordered; it reads MPPTALPPLRPPAQPYDSYSSSLSPSSPRFHPASAPHGRRAPSPSRL. Topologically, residues 1-81 are cytoplasmic; sequence MPPTALPPLR…HIRPHLTPRT (81 aa). A compositionally biased stretch (low complexity) spans 15–28; sequence PYDSYSSSLSPSSP. The helical transmembrane segment at 82–102 threads the bilayer; the sequence is LTPLLLWTLALWLVHHFLFPF. At 103 to 864 the chain is on the lumenal side; it reads SSPLAALSRP…WDPVKDRYHD (762 aa). N-linked (GlcNAc...) asparagine glycosylation is found at asparagine 199 and asparagine 301.

It belongs to the XPT1 family. Mn(2+) serves as cofactor.

It is found in the golgi apparatus membrane. The catalysed reaction is 3-alpha-D-mannopyranosyl-alpha-D-mannopyranose + UDP-alpha-D-xylose = 3-O-(6-O-alpha-D-xylosylphospho-alpha-D-mannopyranosyl)-alpha-D-mannopyranose + UMP + H(+). Xylosylphosphotransferase that is specific for UDP-xylose as a donor and mannose as an acceptor to form a xylose-alpha-1-phosphate-6-mannose linkage. Functions in the O-glycosylation of proteins en route through the secretory pathway. This chain is 3-O-alpha-D-mannopyranosyl-alpha-D-mannopyranose xylosylphosphotransferase (XPT1), found in Cryptococcus neoformans var. neoformans serotype D (strain B-3501A) (Filobasidiella neoformans).